Reading from the N-terminus, the 69-residue chain is uncharacterized protein (69 aa).

Positions 1–16 are cleaved as a signal peptide; it reads MSLGLIFALLLTHAAA.

This is an uncharacterized protein from Archaeoglobus fulgidus (strain ATCC 49558 / DSM 4304 / JCM 9628 / NBRC 100126 / VC-16).